Reading from the N-terminus, the 389-residue chain is Flap endonuclease 1 (389 aa).

Residues 1–105 (MGIKGLTALM…GELAKRKDKR (105 aa)) form an N-domain region. D34 provides a ligand contact to Mg(2+). R71 serves as a coordination point for DNA. Mg(2+)-binding residues include D87, E159, E161, D180, and D182. The interval 123–254 (EVEKLSKRTV…KTALKLIKEH (132 aa)) is I-domain. E159 serves as a coordination point for DNA. DNA contacts are provided by G232 and D234. D234 serves as a coordination point for Mg(2+). Residues 338–346 (SQNRLESFF) are interaction with PCNA. The tract at residues 356–389 (IGKRKVEEKKGKNGKAGLANKKSKGVSGFRRSKN) is disordered.

Belongs to the XPG/RAD2 endonuclease family. FEN1 subfamily. In terms of assembly, interacts with PCNA. Three molecules of FEN1 bind to one PCNA trimer with each molecule binding to one PCNA monomer. PCNA stimulates the nuclease activity without altering cleavage specificity. Requires Mg(2+) as cofactor. Phosphorylated. Phosphorylation upon DNA damage induces relocalization to the nuclear plasma.

The protein localises to the nucleus. It localises to the nucleolus. Its subcellular location is the nucleoplasm. The protein resides in the mitochondrion. In terms of biological role, structure-specific nuclease with 5'-flap endonuclease and 5'-3' exonuclease activities involved in DNA replication and repair. During DNA replication, cleaves the 5'-overhanging flap structure that is generated by displacement synthesis when DNA polymerase encounters the 5'-end of a downstream Okazaki fragment. It enters the flap from the 5'-end and then tracks to cleave the flap base, leaving a nick for ligation. Also involved in the long patch base excision repair (LP-BER) pathway, by cleaving within the apurinic/apyrimidinic (AP) site-terminated flap. Acts as a genome stabilization factor that prevents flaps from equilibrating into structures that lead to duplications and deletions. Also possesses 5'-3' exonuclease activity on nicked or gapped double-stranded DNA, and exhibits RNase H activity. Also involved in replication and repair of rDNA and in repairing mitochondrial DNA. In Ostreococcus lucimarinus (strain CCE9901), this protein is Flap endonuclease 1.